The sequence spans 271 residues: Tryptophan synthase alpha chain (271 aa).

Catalysis depends on proton acceptor residues Glu49 and Asp60.

The protein belongs to the TrpA family. Tetramer of two alpha and two beta chains.

It carries out the reaction (1S,2R)-1-C-(indol-3-yl)glycerol 3-phosphate + L-serine = D-glyceraldehyde 3-phosphate + L-tryptophan + H2O. It participates in amino-acid biosynthesis; L-tryptophan biosynthesis; L-tryptophan from chorismate: step 5/5. In terms of biological role, the alpha subunit is responsible for the aldol cleavage of indoleglycerol phosphate to indole and glyceraldehyde 3-phosphate. The chain is Tryptophan synthase alpha chain from Yersinia pestis bv. Antiqua (strain Angola).